We begin with the raw amino-acid sequence, 901 residues long: HTH-type transcriptional regulator MalT (901 aa).

39–46 (SPAGYGKT) is an ATP binding site. In terms of domain architecture, HTH luxR-type spans 829-894 (ELIRTSPLTQ…AAVQHAQKLL (66 aa)). Residues 853 to 872 (NEQIAGELEVAATTIKTHIR) constitute a DNA-binding region (H-T-H motif).

Belongs to the MalT family. Monomer in solution. Oligomerizes to an active state in the presence of the positive effectors ATP and maltotriose.

Its activity is regulated as follows. Activated by ATP and maltotriose, which are both required for DNA binding. Positively regulates the transcription of the maltose regulon whose gene products are responsible for uptake and catabolism of malto-oligosaccharides. Specifically binds to the promoter region of its target genes, recognizing a short DNA motif called the MalT box. In Escherichia coli O7:K1 (strain IAI39 / ExPEC), this protein is HTH-type transcriptional regulator MalT.